Here is a 484-residue protein sequence, read N- to C-terminus: Nuclear rim protein 1 (484 aa).

A Phosphoserine modification is found at Ser3. A run of 2 helical transmembrane segments spans residues 145 to 165 (FTIF…MFGY) and 237 to 257 (IPTN…IVFL). Residues 416–457 (SSNENLEKGGAFLPNQDQNRPSKSLSPLRKTPLSARQKRFEG) are disordered. Ser417 carries the post-translational modification Phosphoserine. Residues 430–440 (NQDQNRPSKSL) are compositionally biased toward polar residues. Ser474 is modified (phosphoserine).

It belongs to the NUR1 family. Interacts with CSM1.

Its subcellular location is the nucleus membrane. In terms of biological role, member of a perinuclear network that controls recombination at multiple loci to maintain genome stability. Required for rDNA repeat stability. The polypeptide is Nuclear rim protein 1 (NUR1) (Saccharomyces cerevisiae (strain JAY291) (Baker's yeast)).